We begin with the raw amino-acid sequence, 473 residues long: MSRLVVVSNRIAPPDNKGGAGGLAVGVLGALKAAGGLWFGWSGETGNEDEPLKKVTKGNITWASFNLSEQDYEDYYCQFSNAVLWPAFHYRLDLVQFQRPAWEGYMRVNALLADKLLPLIKENDIIWVHDYHLLPFASELRKRGVNNRIGFFLHIPFPTPEIFNALPPHDELLEQLCDFDLLGFQTENDRLAFLDSLSSQTRVTTRSGKQHIAWGKDFQTEVYPIGIEPDEIALQAAGPLPPKLAQLKAELKNVKNIFSVERLDYSKGLPERFLAYEALLENYPQHRGKIRYTQIAPTSRGEVQAYQDIRHQLETEAGRINGKYGQLGWTPLYYLNQHFDRKLLMKIFRYSDVGLVTPLRDGMNLVAKEFVAAQDPANPGVLVLSQFAGAANELTSALIVNPYDRDDVAAALNRALTMPLAERISRHAEMLDVIVKNDINRWQERFIHDLKEVTPRSPERQQQNNVATFPKLA.

Arg10 provides a ligand contact to D-glucose 6-phosphate. 21 to 22 (GG) serves as a coordination point for UDP-alpha-D-glucose. The D-glucose 6-phosphate site is built by Tyr76 and Asp130. The UDP-alpha-D-glucose site is built by Arg262 and Lys267. Arg300 contributes to the D-glucose 6-phosphate binding site. UDP-alpha-D-glucose contacts are provided by residues Phe339 and 365-369 (LVAKE). The segment at 454–473 (TPRSPERQQQNNVATFPKLA) is disordered.

Belongs to the glycosyltransferase 20 family. Homotetramer.

It catalyses the reaction D-glucose 6-phosphate + UDP-alpha-D-glucose = alpha,alpha-trehalose 6-phosphate + UDP + H(+). It participates in glycan biosynthesis; trehalose biosynthesis. Functionally, probably involved in the osmoprotection via the biosynthesis of trehalose. Catalyzes the transfer of glucose from UDP-alpha-D-glucose (UDP-Glc) to D-glucose 6-phosphate (Glc-6-P) to form trehalose-6-phosphate. Acts with retention of the anomeric configuration of the UDP-sugar donor. This chain is Trehalose-6-phosphate synthase, found in Salmonella paratyphi A (strain ATCC 9150 / SARB42).